Here is a 216-residue protein sequence, read N- to C-terminus: Thylakoid lumenal 16.5 kDa protein, chloroplastic (216 aa).

Residues 1–38 constitute a chloroplast transit peptide; that stretch reads MAKSLLCSSTLNPFFSTTLSSSKKNQIAYSGNSKNQTS. A thylakoid-targeting transit peptide spans 39–73; the sequence is SSLLWKRRELSLGFMSSLVAIGLVSNDRRRHDANA.

Its subcellular location is the plastid. The protein localises to the chloroplast thylakoid lumen. This is Thylakoid lumenal 16.5 kDa protein, chloroplastic from Arabidopsis thaliana (Mouse-ear cress).